Reading from the N-terminus, the 366-residue chain is Growth hormone secretagogue receptor type 1 (366 aa).

The Extracellular portion of the chain corresponds to 1–40 (MWNATLSEEPGYNLTLPDLGWDAPADNDSLTDELLPLFPA). N-linked (GlcNAc...) asparagine glycans are attached at residues Asn3, Asn13, and Asn27. The helical transmembrane segment at 41–66 (PLLAGVTATCVALFVVGIAGNLLTML) threads the bilayer. Residues 67–72 (VVSRFR) lie on the Cytoplasmic side of the membrane. A helical membrane pass occupies residues 73-96 (ELRTTTNLYLSSMAFSDLLIFLCM). Residues 97 to 117 (PLDLVRLWQYRPWNFGDLLCK) lie on the Extracellular side of the membrane. A disulfide bond links Cys116 and Cys198. Residues 118 to 139 (LFQFVSESCTYATVLTITALSV) traverse the membrane as a helical segment. Over 140–162 (ERYFAICFPLRAKVVVTKGRVKL) the chain is Cytoplasmic. A helical membrane pass occupies residues 163–183 (VILVIWAVAFCSAGPIFVLVG). The Extracellular segment spans residues 184–211 (VEHENGTDPRDTNECRATEFAVRSGLLT). N-linked (GlcNAc...) asparagine glycosylation is present at Asn188. A helical transmembrane segment spans residues 212 to 235 (VMVWVSSVFFFLPVFCLTVLYSLI). Over 236-263 (GRKLWRRKRGEAAVGASLRDQNHKQTVK) the chain is Cytoplasmic. Residues 264 to 285 (MLAVVVFAFILCWLPFHVGRYL) traverse the membrane as a helical segment. Residues 286 to 302 (FSKSFEPGSLEIAQISQ) are Extracellular-facing. Residues 303–326 (YCNLVSFVLFYLSAAINPILYNIM) form a helical membrane-spanning segment. At 327 to 366 (SKKYRVAVFKLLGFEPFSQRKLSTLKDESSRAWTETSINT) the chain is on the cytoplasmic side.

The protein belongs to the G-protein coupled receptor 1 family.

The protein resides in the cell membrane. Receptor for ghrelin, coupled to G-alpha-11 proteins. Stimulates growth hormone secretion. Also binds other growth hormone releasing peptides (GHRP) (e.g. Met-enkephalin and GHRP-6) as well as non-peptide, low molecular weight secretagogues (e.g. L-692,429, MK-0677, adenosine). This is Growth hormone secretagogue receptor type 1 (GHSR) from Mustela putorius furo (European domestic ferret).